A 3925-amino-acid chain; its full sequence is Polyketide synthase ThaH (3925 aa).

The segment at 1 to 56 (MPRWRPTWLKRLSCPKQPRHPTHPKHPTHPKHPKHPKHPRHPKHPRISRRCSSASA) is disordered. The segment covering 17–49 (QPRHPTHPKHPTHPKHPKHPKHPRHPKHPRISR) has biased composition (basic residues). Residues 1073-1148 (GLVGGLEGEV…DIAGYIASAE (76 aa)) form the Carrier 1 domain. At Ser-1108 the chain carries O-(pantetheine 4'-phosphoryl)serine. Positions 1166–1182 (AAVATPPGRPAGEAAGA) are enriched in low complexity. The interval 1166–1233 (AAVATPPGRP…GEPARAASHG (68 aa)) is disordered. The span at 1183-1196 (QRDRAPRAADERAD) shows a compositional bias: basic and acidic residues. The span at 1202–1216 (PSDAHASKAAAIDSR) shows a compositional bias: low complexity. Residues 1237–1667 (ADGLAIIGIA…GTNAHALVEA (431 aa)) enclose the Ketosynthase family 3 (KS3) 1 domain. Active-site for beta-ketoacyl synthase 1 activity residues include Cys-1413, His-1549, and His-1589. Residues 1679–1698 (GATGAPDVPDAPDAPDAPDA) are disordered. Residues 1844–1969 (HPLLHRNVST…GHVQRIAEPA (126 aa)) form an N-terminal hotdog fold region. The 300-residue stretch at 1844–2143 (HPLLHRNVST…ARRFVREPAR (300 aa)) folds into the PKS/mFAS DH domain. The Proton acceptor; for dehydratase activity role is filled by His-1873. The interval 1983 to 2143 (AAPRLSAARC…ARRFVREPAR (161 aa)) is C-terminal hotdog fold. The active-site Proton donor; for dehydratase activity is Asp-2043. Low complexity-rich tracts occupy residues 2594 to 2607 (DDPA…AASS) and 2632 to 2646 (PAAA…ASDA). 2 disordered regions span residues 2594-2613 (DDPA…LPEM) and 2619-2657 (APAD…AAPA). Positions 2664-2737 (EHALALLKRL…ELACYFVAHH (74 aa)) constitute a Carrier 2 domain. Ser-2698 bears the O-(pantetheine 4'-phosphoryl)serine mark. A compositionally biased stretch (low complexity) spans 2753-2768 (LAPAPAQPLAPRAPSA). The disordered stretch occupies residues 2753–2841 (LAPAPAQPLA…AHAPAQASAP (89 aa)). Residues 2770–2779 (PARDAARSLE) are compositionally biased toward basic and acidic residues. Composition is skewed to low complexity over residues 2789–2813 (GQEP…QASA) and 2823–2841 (ETRT…ASAP). Residues 2847 to 3286 (AFDIAIVGLA…GSNAHLIVEE (440 aa)) enclose the Ketosynthase family 3 (KS3) 2 domain. Residues Cys-3022, His-3157, and His-3197 each act as for beta-ketoacyl synthase 2 activity in the active site. 2 stretches are compositionally biased toward low complexity: residues 3512-3524 (ASTA…PSPA) and 3578-3592 (AAAA…SSPS). Disordered stretches follow at residues 3512–3531 (ASTA…STGE) and 3578–3619 (AAAA…AAPD). Pro residues predominate over residues 3593–3603 (PSSPSPLPSSP). Positions 3604–3619 (PRMSSRQHASPAAAPD) are enriched in low complexity. One can recognise a Carrier 3 domain in the interval 3622–3699 (AALLDIEAFL…AMARHVSSNA (78 aa)). At Ser-3659 the chain carries O-(pantetheine 4'-phosphoryl)serine. The disordered stretch occupies residues 3734 to 3754 (PAPFASAAPPEPPASPARADG). In terms of domain architecture, Carrier 4 spans 3762-3839 (TSLDAIRAHL…ALARFVGTQL (78 aa)). Residue Ser-3799 is modified to O-(pantetheine 4'-phosphoryl)serine.

This sequence belongs to the ATP-dependent AMP-binding enzyme family. Requires pantetheine 4'-phosphate as cofactor.

It localises to the cytoplasm. It functions in the pathway antibiotic biosynthesis. Involved in production of the polyketide antibiotic thailandamide. The chain is Polyketide synthase ThaH from Burkholderia thailandensis (strain ATCC 700388 / DSM 13276 / CCUG 48851 / CIP 106301 / E264).